Reading from the N-terminus, the 300-residue chain is MSIKSGFVALAGKPNVGKSTFINVVMGRKVVIVSDKPQTTRNRINCIYTDRDSQIIFVDTPGIHKPLHRLGEYMVKAAVQALKGVDLILFMLDAADGFTKTDEHVAKIVSESGTKTIIAVNKIDVAGEEKAKAVGQLAKSMVENVVSVHYISALKGEGVFEVLEKIKEELPEGPQYYPEDMVTDRPLSFMAAEIIREKIFHLTRQEVPHSTAVVIEEIKDRPNGVLYIRANIYVERDSQKGILIGKNGSMIKKIGTLAREELEFLVGRKVYLDLNVKVKENWREKDFIILQEIGLKDDIK.

The 169-residue stretch at 4–172 (KSGFVALAGK…LEKIKEELPE (169 aa)) folds into the Era-type G domain. The tract at residues 12–19 (GKPNVGKS) is G1. 12 to 19 (GKPNVGKS) contacts GTP. The tract at residues 38-42 (QTTRN) is G2. The segment at 59–62 (DTPG) is G3. GTP contacts are provided by residues 59 to 63 (DTPGI) and 121 to 124 (NKID). The tract at residues 121–124 (NKID) is G4. Residues 151–153 (ISA) form a G5 region. The KH type-2 domain maps to 195–280 (IREKIFHLTR…YLDLNVKVKE (86 aa)).

The protein belongs to the TRAFAC class TrmE-Era-EngA-EngB-Septin-like GTPase superfamily. Era GTPase family. Monomer.

The protein resides in the cytoplasm. It localises to the cell inner membrane. Functionally, an essential GTPase that binds both GDP and GTP, with rapid nucleotide exchange. Plays a role in 16S rRNA processing and 30S ribosomal subunit biogenesis and possibly also in cell cycle regulation and energy metabolism. This is GTPase Era from Thermotoga petrophila (strain ATCC BAA-488 / DSM 13995 / JCM 10881 / RKU-1).